A 409-amino-acid polypeptide reads, in one-letter code: SPI-1 type 3 secretion system translocon protein SctB (409 aa).

Residues Ile-119–Leu-140 traverse the membrane as a helical segment.

The protein belongs to the SctB/SipC family. As to quaternary structure, the core secretion machinery of the T3SS is composed of approximately 20 different proteins, including cytoplasmic components, a base, an export apparatus and a needle. This subunit is involved in the formation of a pore, called the translocon, in host membrane.

It localises to the secreted. It is found in the host membrane. Component of the type III secretion system 1 (SPI-1 T3SS), also called injectisome, which is used to inject bacterial effector proteins into eukaryotic host cells. SipB/SctE1 and SipC/SctB1 are inserted into the host membrane where they form a pore and allow the translocation of effector proteins into the cytosol of target cells. The chain is SPI-1 type 3 secretion system translocon protein SctB from Salmonella typhimurium (strain 14028s / SGSC 2262).